The following is a 2904-amino-acid chain: Highly reducing polyketide synthase bet1 (2904 aa).

The Ketosynthase family 3 (KS3) domain maps to 8-441; that stretch reads NEPIAIVGSG…GTNAHAIVES (434 aa). Residues Cys181, His320, and His361 each act as for beta-ketoacyl synthase activity in the active site. An acyl transferase (AT) domain region spans residues 553–875; the sequence is VFTGQGAQYA…PYHGTLLRGG (323 aa). The interval 948–1081 is N-terminal hotdog fold; it reads HQLLGDVSPD…GELKVVLVDE (134 aa). In terms of domain architecture, PKS/mFAS DH spans 948–1257; sequence HQLLGDVSPD…FKPVGSDASN (310 aa). A dehydratase (DH) domain region spans residues 971–1255; the sequence is PREMTWLEGH…VKFKPVGSDA (285 aa). His980 serves as the catalytic Proton acceptor; for dehydratase activity. The interval 1098-1257 is C-terminal hotdog fold; the sequence is MIPVQPSRLY…FKPVGSDASN (160 aa). The active-site Proton donor; for dehydratase activity is the Asp1159. The tract at residues 1411–1596 is methyltransferase (cMeT) domain; it reads KQSTLWVASI…GFSGIDTMSP (186 aa). The segment at 2125–2298 is ketoreductase (KR)domain; it reads TYWLVGLSGA…RSSVVNVGAI (174 aa). A Carrier domain is found at 2407 to 2486; sequence EVANVIKQAY…SLVELAAESI (80 aa). Ser2445 is modified (O-(pantetheine 4'-phosphoryl)serine). The segment at 2492-2543 is disordered; that stretch reads PGVPQANANPNGPSSPDSDATESSNQNSDVDVTSTRATSPSTPAATSPDSNV. Positions 2497–2523 are enriched in polar residues; the sequence is ANANPNGPSSPDSDATESSNQNSDVDV. Low complexity predominate over residues 2524-2541; it reads TSTRATSPSTPAATSPDS. Residues 2585-2817 form a reductase (R) domain region; the sequence is LTGCSGLLGH…DLVSVETCCE (233 aa).

The cofactor is pantetheine 4'-phosphate.

The catalysed reaction is 7 malonyl-CoA + acetyl-CoA + 10 AH2 + 5 S-adenosyl-L-methionine + 2 H(+) = dehydroprobetaenone I + 10 A + 5 S-adenosyl-L-homocysteine + 7 CO2 + 8 CoA + 6 H2O. The protein operates within mycotoxin biosynthesis. Highly reducing polyketide synthase; part of the gene cluster that mediates the biosynthesis of betaenones, phytotoxic polyketides involved in leaf spot disease in sugar beets. The first step of the pathway is the synthesis of dehydroprobetaenone I by the polyketide synthase bet1 and the enoyl reductase bet3 via condensation of one acetyl-CoA starter unit with 7 malonyl-CoA units and 5 methylations. The C-terminal reductase (R) domain of bet1 catalyzes the reductive release of the polyketide chain. Because bet1 lacks a designated enoylreductase (ER) domain, the required activity is provided the enoyl reductase bet3. The short-chain dehydrogenase/reductase bet4 then catalyzes reduction of dehydroprobetaenone I to probetaenone I. The cytochrome P450 monooxygenase bet2 catalyzes successive epoxidation, oxidation (resulting from epoxide opening) and hydroxylation to install a tertiary alcohol in the decaline ring to yield betaenone C from dehydroprobetaenone I and betaenone B from probetaenone I. The FAD-linked oxidoreductase (orf1) is probably responsible for the conversion of betaenone C to betaenone A via an intramolecular aldol reaction between C-1 and C-17 to form the bridged tricyclic system in betaenone A. This chain is Highly reducing polyketide synthase bet1, found in Neocamarosporium betae (Beet black rot fungus).